We begin with the raw amino-acid sequence, 394 residues long: uncharacterized protein (394 aa).

Phosphoserine occurs at positions 117 and 121. Disordered stretches follow at residues Asp177–Phe295, Lys315–Ser347, and Ser370–Val394. The segment covering Ser178–Glu190 has biased composition (acidic residues). Polar residues-rich tracts occupy residues Ser191–Tyr207 and Glu216–Ile230. Acidic residues-rich tracts occupy residues Ser231–Asp263 and Ile284–Phe295. The segment covering Ser370–Ser379 has biased composition (polar residues). Ser379 carries the post-translational modification Phosphoserine.

It is found in the nucleus. This is an uncharacterized protein from Schizosaccharomyces pombe (strain 972 / ATCC 24843) (Fission yeast).